The following is a 324-amino-acid chain: Myb-like DNA-binding protein myb-1 (324 aa).

2 consecutive HTH myb-type domains span residues M4–L59 and N60–K110. The segment at N107–T231 is disordered. The segment covering R155–D165 has biased composition (polar residues). Residues S166–I175 are compositionally biased toward basic and acidic residues. Low complexity-rich tracts occupy residues Q183–Q192 and P222–T231.

Its subcellular location is the nucleus. The sequence is that of Myb-like DNA-binding protein myb-1 (rca-1) from Neurospora crassa (strain ATCC 24698 / 74-OR23-1A / CBS 708.71 / DSM 1257 / FGSC 987).